Reading from the N-terminus, the 188-residue chain is dTTP/UTP pyrophosphatase (188 aa).

Residue aspartate 70 is the Proton acceptor of the active site.

This sequence belongs to the Maf family. YhdE subfamily. Requires a divalent metal cation as cofactor.

Its subcellular location is the cytoplasm. The catalysed reaction is dTTP + H2O = dTMP + diphosphate + H(+). It catalyses the reaction UTP + H2O = UMP + diphosphate + H(+). Its function is as follows. Nucleoside triphosphate pyrophosphatase that hydrolyzes dTTP and UTP. May have a dual role in cell division arrest and in preventing the incorporation of modified nucleotides into cellular nucleic acids. This is dTTP/UTP pyrophosphatase from Clostridium botulinum (strain Alaska E43 / Type E3).